The sequence spans 380 residues: Cytochrome b (380 aa).

Helical transmembrane passes span 33–53 (FGSLLGLCLFSQILTGLFLAM), 77–98 (WFIRSLHANGASFFFICIYLHI), 113–133 (WTIGVVLLGLVMATAFVGYVL), and 178–198 (FFTFHFLLPFIIAAATLVHLL). Heme b-binding residues include His83 and His97. His182 and His196 together coordinate heme b. Residue His201 participates in a ubiquinone binding. The next 4 membrane-spanning stretches (helical) occupy residues 226 to 246 (YKDLLGFLALLSALTSLALFS), 288 to 308 (LGGVLALLFSILVLVLVPILH), 320 to 340 (LTQTLFWTLVADMLILTWIGG), and 347 to 367 (FVIIGQVASTLYFLLFLVLAP).

It belongs to the cytochrome b family. In terms of assembly, the cytochrome bc1 complex contains 3 respiratory subunits (MT-CYB, CYC1 and UQCRFS1), 2 core proteins (UQCRC1 and UQCRC2) and probably 6 low-molecular weight proteins. Heme b serves as cofactor.

The protein resides in the mitochondrion inner membrane. Its function is as follows. Component of the ubiquinol-cytochrome c reductase complex (complex III or cytochrome b-c1 complex) that is part of the mitochondrial respiratory chain. The b-c1 complex mediates electron transfer from ubiquinol to cytochrome c. Contributes to the generation of a proton gradient across the mitochondrial membrane that is then used for ATP synthesis. The polypeptide is Cytochrome b (mt-cyb) (Lampris guttatus (Opah)).